The sequence spans 459 residues: SLIT-ROBO Rho GTPase-activating protein 2C (459 aa).

Positions 22–325 constitute an F-BAR domain; that stretch reads KEIRAQLTEQ…AVENLDATSD (304 aa). Positions 181-202 are enriched in basic and acidic residues; sequence LKEAEKQEEKQIGKSVKQEDRQ. Positions 181 to 211 are disordered; sequence LKEAEKQEEKQIGKSVKQEDRQTPCSPDSTA. The stretch at 363 to 401 forms a coiled coil; it reads QSELVQRCQQLQSRLSTLKIENEEVKKTMEATLQTIQDI.

Homodimer. Interacts (via F-BAR domain) with SRGAP2/SRGAP2A (via F-BAR domain); formation of the heterodimer inhibits SRGAP2/SRGAP2A function. Ubiquitously expressed with higher expression in cerebellum. Probably expressed in fetal and adult neurons (at protein level).

In terms of biological role, human-specific protein that acts as a key modifier of cortical connectivity in the human brain. Acts by inhibiting the functions of ancestral paralog SRGAP2/SRGAP2A, a postsynaptic protein that regulates excitatory and inhibitory synapse maturation and density in cortical pyramidal neurons. SRGAP2C is unstable but is able to heterodimerize with SRGAP2/SRGAP2A, thereby reducing SRGAP2/SRGAP2A levels through proteasome-dependent degradation. Inhibition of SRGAP2/SRGAP2A by SRGAP2C leads to an increase in synaptic density and protracted synaptic maturation of both excitatory and inhibitory synapses. Modifies cortical circuit connectivity by increasing the number of local and long-range cortical inputs received by layer 2/3 pyramidal neurons. Also able to increase the probability of sensory-evoked responses by layer 2/3 pyramidal neurons. In Homo sapiens (Human), this protein is SLIT-ROBO Rho GTPase-activating protein 2C.